Reading from the N-terminus, the 760-residue chain is MRTANIFTQITQINTTNDVVSFRNTTGKRVIISFTLKTQYRQFSNVTNNIRPQVLNLKEKGIENRKKLVNSQSLSFFKTTAQAIESQLNSGNLLASSQSIEEIKNISLPVDLNKNVIRFKKRKLLTAYLKQLQIKKLNAVKFTFKLKNRLLNRKTVVVSYTPKVNNTNKVNFLQQLLTFKQKVAKHYAITKISNKNQTMFLNTHGIFRNQKVFKRSKLKMLHQQKVSIKLLQKVLRFQKQRYSILKPHNKFDSILTALMADCNPKKRMKKNSLPIDINHRTEISQQQKDSDLEGLLTKYKVKTQELITKITKKQRRLKYYLILTQLRVQKDLSKGNEVEKKQEIQKKNEQKQQKSIQTQFIKKVLTGVLQKNEQQQETQKALIIKILLNILRRKGEVTGEGNMDITYPYLKEVKKKQRQLQMAYVAANIKMKLVNDFIDYKGDSRLWGIHVNLIKSRNQYLNIIETQFENEENVYQNPIYKTKLVPLRSEVEYLKKTRYMKYGVNSRNKITILNNVMESDKKLYNLRLPKQRVQVPTLLTIYKNVRECLSGTRAQGKKEEDRAIYQFVMKLEKLKRNRNRKQSKLRISKQQEIQPQKEESVKKEKVEQIPLRQGVLRITLKRRNMFLVCQNKSTKHVDTSLTARQEYYRIYNTKDFDAITQKGKKDLKATTVKPKGPIGRFISTEVFRRRVITQALLNLRAQIKYNVLDIEIRNPTSNPLIKTILYKNWYVYKNQGLLRMYKFTKNKAHGSMRQKKARRL.

Residues 578-587 show a composition bias toward basic residues; it reads RNRKQSKLRI. The disordered stretch occupies residues 578–604; that stretch reads RNRKQSKLRISKQQEIQPQKEESVKKE. Residues 595–604 are compositionally biased toward basic and acidic residues; the sequence is PQKEESVKKE.

It is found in the mitochondrion. This is an uncharacterized protein from Dictyostelium citrinum (Slime mold).